We begin with the raw amino-acid sequence, 591 residues long: Aspartate--tRNA ligase (591 aa).

Residue E174 coordinates L-aspartate. An aspartate region spans residues 198–201 (QLFK). R220 contributes to the L-aspartate binding site. Residues 220–222 (RDE) and Q229 contribute to the ATP site. An L-aspartate-binding site is contributed by H450. E486 is an ATP binding site. L-aspartate is bound at residue R493. Position 538 to 541 (538 to 541 (GLDR)) interacts with ATP.

It belongs to the class-II aminoacyl-tRNA synthetase family. Type 1 subfamily. Homodimer.

Its subcellular location is the cytoplasm. It carries out the reaction tRNA(Asp) + L-aspartate + ATP = L-aspartyl-tRNA(Asp) + AMP + diphosphate. Catalyzes the attachment of L-aspartate to tRNA(Asp) in a two-step reaction: L-aspartate is first activated by ATP to form Asp-AMP and then transferred to the acceptor end of tRNA(Asp). In Leuconostoc mesenteroides subsp. mesenteroides (strain ATCC 8293 / DSM 20343 / BCRC 11652 / CCM 1803 / JCM 6124 / NCDO 523 / NBRC 100496 / NCIMB 8023 / NCTC 12954 / NRRL B-1118 / 37Y), this protein is Aspartate--tRNA ligase.